Consider the following 360-residue polypeptide: Phospho-N-acetylmuramoyl-pentapeptide-transferase (360 aa).

Helical transmembrane passes span 27–47 (ILSI…LIAW), 73–93 (TMGG…WADL), 94–114 (TNPY…VGFV), 132–152 (WKYF…YAYG), 168–188 (VMPQ…VGTS), 199–219 (GLAI…AWAT), 236–256 (ASEL…FLWF), 263–283 (VFMG…IAVL), 288–308 (FLLV…ILQV), and 338–358 (VIVR…ATLK).

This sequence belongs to the glycosyltransferase 4 family. MraY subfamily. It depends on Mg(2+) as a cofactor.

Its subcellular location is the cell inner membrane. The enzyme catalyses UDP-N-acetyl-alpha-D-muramoyl-L-alanyl-gamma-D-glutamyl-meso-2,6-diaminopimeloyl-D-alanyl-D-alanine + di-trans,octa-cis-undecaprenyl phosphate = di-trans,octa-cis-undecaprenyl diphospho-N-acetyl-alpha-D-muramoyl-L-alanyl-D-glutamyl-meso-2,6-diaminopimeloyl-D-alanyl-D-alanine + UMP. It participates in cell wall biogenesis; peptidoglycan biosynthesis. Catalyzes the initial step of the lipid cycle reactions in the biosynthesis of the cell wall peptidoglycan: transfers peptidoglycan precursor phospho-MurNAc-pentapeptide from UDP-MurNAc-pentapeptide onto the lipid carrier undecaprenyl phosphate, yielding undecaprenyl-pyrophosphoryl-MurNAc-pentapeptide, known as lipid I. This chain is Phospho-N-acetylmuramoyl-pentapeptide-transferase, found in Aliivibrio fischeri (strain MJ11) (Vibrio fischeri).